Here is an 874-residue protein sequence, read N- to C-terminus: Alanine--tRNA ligase (874 aa).

Positions 564, 568, 665, and 669 each coordinate Zn(2+).

It belongs to the class-II aminoacyl-tRNA synthetase family. Zn(2+) is required as a cofactor.

The protein resides in the cytoplasm. The catalysed reaction is tRNA(Ala) + L-alanine + ATP = L-alanyl-tRNA(Ala) + AMP + diphosphate. Functionally, catalyzes the attachment of alanine to tRNA(Ala) in a two-step reaction: alanine is first activated by ATP to form Ala-AMP and then transferred to the acceptor end of tRNA(Ala). Also edits incorrectly charged Ser-tRNA(Ala) and Gly-tRNA(Ala) via its editing domain. The protein is Alanine--tRNA ligase of Cupriavidus necator (strain ATCC 17699 / DSM 428 / KCTC 22496 / NCIMB 10442 / H16 / Stanier 337) (Ralstonia eutropha).